An 83-amino-acid polypeptide reads, in one-letter code: Exodeoxyribonuclease 7 small subunit (83 aa).

It belongs to the XseB family. In terms of assembly, heterooligomer composed of large and small subunits.

The protein resides in the cytoplasm. The enzyme catalyses Exonucleolytic cleavage in either 5'- to 3'- or 3'- to 5'-direction to yield nucleoside 5'-phosphates.. Functionally, bidirectionally degrades single-stranded DNA into large acid-insoluble oligonucleotides, which are then degraded further into small acid-soluble oligonucleotides. The protein is Exodeoxyribonuclease 7 small subunit of Rhizobium rhizogenes (strain K84 / ATCC BAA-868) (Agrobacterium radiobacter).